A 233-amino-acid polypeptide reads, in one-letter code: Achaete-scute homolog 1 (233 aa).

Disordered regions lie at residues 1-24 (MESSGKMESGAGQQPQPPQPFLPP) and 39-95 (AAAA…ELMR). Over residues 39–62 (AAAAAAQSAQQQQQQQAPQQQAPQ) the composition is skewed to low complexity. The segment covering 78 to 87 (SAAKQVKRQR) has biased composition (basic residues). The bHLH domain maps to 115–167 (AAVARRNERERNRVKLVNLGFATLREHVPNGAANKKMSKVETLRSAVEYIRAL). Lys153 bears the N6-acetyllysine mark.

Efficient DNA binding requires dimerization with another bHLH protein. Forms a heterodimer with TCF3. In terms of tissue distribution, developing CNS and PNS at embryonic and postnatal stages.

The protein localises to the nucleus. Transcription factor that plays a key role in neuronal differentiation: acts as a pioneer transcription factor, accessing closed chromatin to allow other factors to bind and activate neural pathways. Directly binds the E box motif (5'-CANNTG-3') on promoters and promotes transcription of neuronal genes. The combination of three transcription factors, ASCL1, POU3F2/BRN2 and MYT1L, is sufficient to reprogram fibroblasts and other somatic cells into induced neuronal (iN) cells in vitro. Plays a role at early stages of development of specific neural lineages in most regions of the CNS, and of several lineages in the PNS. Essential for the generation of olfactory and autonomic neurons. Acts synergistically with FOXN4 to specify the identity of V2b neurons rather than V2a from bipotential p2 progenitors during spinal cord neurogenesis, probably through DLL4-NOTCH signaling activation. Involved in the regulation of neuroendocrine cell development in the glandular stomach. The sequence is that of Achaete-scute homolog 1 (Ascl1) from Rattus norvegicus (Rat).